A 457-amino-acid chain; its full sequence is UDP-N-acetylmuramoylalanine--D-glutamate ligase (457 aa).

Gly-117–Thr-123 serves as a coordination point for ATP.

The protein belongs to the MurCDEF family.

The protein resides in the cytoplasm. It carries out the reaction UDP-N-acetyl-alpha-D-muramoyl-L-alanine + D-glutamate + ATP = UDP-N-acetyl-alpha-D-muramoyl-L-alanyl-D-glutamate + ADP + phosphate + H(+). It participates in cell wall biogenesis; peptidoglycan biosynthesis. Its function is as follows. Cell wall formation. Catalyzes the addition of glutamate to the nucleotide precursor UDP-N-acetylmuramoyl-L-alanine (UMA). This Paramagnetospirillum magneticum (strain ATCC 700264 / AMB-1) (Magnetospirillum magneticum) protein is UDP-N-acetylmuramoylalanine--D-glutamate ligase.